The primary structure comprises 95 residues: Acylphosphatase (95 aa).

The region spanning 5 to 93 (RAHVFIRGKV…GEFKDFKILP (89 aa)) is the Acylphosphatase-like domain. Catalysis depends on residues R20 and N38.

The protein belongs to the acylphosphatase family.

It carries out the reaction an acyl phosphate + H2O = a carboxylate + phosphate + H(+). In Pyrobaculum aerophilum (strain ATCC 51768 / DSM 7523 / JCM 9630 / CIP 104966 / NBRC 100827 / IM2), this protein is Acylphosphatase (acyP).